The following is a 519-amino-acid chain: Glycerophosphoinositol permease 1 (519 aa).

The tract at residues 1-32 (MSDLVKSSEVIETTEVPPHNNNNNKRHFKYDS) is disordered. A helical membrane pass occupies residues 39–59 (LAGGVKLKDALMILCAGFALI). Residue asparagine 93 is glycosylated (N-linked (GlcNAc...) asparagine). 3 helical membrane-spanning segments follow: residues 94–114 (ASLV…DYIG), 117–137 (WSIV…AASH), and 141–161 (VNGM…GIGA). A glycan (N-linked (GlcNAc...) asparagine) is linked at asparagine 175. Helical transmembrane passes span 186–206 (ILAT…IFLI), 216–236 (DAIW…VFYF), 273–293 (VAWF…AGII), 313–333 (LLLG…VDIL), 337–357 (YTMM…GCGY), 363–383 (ITGL…FGPG), 404–424 (GISA…FSPI), and 432–452 (WTFI…FIFI). Residues 487 to 500 (EEEDLEGSSEDSSD) are compositionally biased toward acidic residues. Residues 487 to 519 (EEEDLEGSSEDSSDGEIVKNNTKNDVEKVDALK) form a disordered region. N-linked (GlcNAc...) asparagine glycosylation is present at asparagine 506. Over residues 508-519 (TKNDVEKVDALK) the composition is skewed to basic and acidic residues.

It belongs to the major facilitator superfamily. Sugar transporter (TC 2.A.1.1) family.

The protein resides in the cell membrane. It catalyses the reaction sn-glycero-3-phospho-1D-myo-inositol(out) = sn-glycero-3-phospho-1D-myo-inositol(in). Glycerophosphodiester transporter that mediates uptake of glycerophosphoinositol (GroPIns) as a source of inositol and phosphate. Does not possess detectable glycerophosphocholine (GroPCho) transport activity. Although no glycerophosphoinositol transport activity occurs in the absence of GIT1, C.albicans is still able to use glycerophosphoinositol as a phosphate source at pH 7.5, albeit slowly. Thus, a second, GIT1-independent, mechanism must exist for utilizing glycerophosphoinositol as a phosphate source at physiological pH. The expanded ability to utilize GroPIns and GroPCho results from the organism's pathogenic nature and its need to occupy a variety of environments within its host organism. This possibility is buttressed by the fact that GroPIns and GroPCho are present and abundant in human fluids. The sequence is that of Glycerophosphoinositol permease 1 from Candida albicans (strain SC5314 / ATCC MYA-2876) (Yeast).